Consider the following 59-residue polypeptide: Putative antitoxin AF_1090 (59 aa).

The protein belongs to the UPF0165 family.

Possibly the antitoxin component of a type II toxin-antitoxin (TA) system. The chain is Putative antitoxin AF_1090 from Archaeoglobus fulgidus (strain ATCC 49558 / DSM 4304 / JCM 9628 / NBRC 100126 / VC-16).